The following is a 99-amino-acid chain: Meromycolate extension acyl carrier protein (99 aa).

Positions 3–81 (ATQEEIIAGL…DVVAYIQKLE (79 aa)) constitute a Carrier domain. Ser41 bears the O-(pantetheine 4'-phosphoryl)serine mark. Lys79 participates in a covalent cross-link: Isoglutamyl lysine isopeptide (Lys-Gln) (interchain with Q-Cter in protein Pup).

This sequence belongs to the acyl carrier protein (ACP) family. In terms of processing, 4'-phosphopantetheine is transferred from CoA to a specific serine of apo-AcpM.

It is found in the cytoplasm. Acyl carrier protein involved in meromycolate extension. The sequence is that of Meromycolate extension acyl carrier protein (acpM) from Mycolicibacterium smegmatis (strain ATCC 700084 / mc(2)155) (Mycobacterium smegmatis).